The primary structure comprises 486 residues: BTB/POZ domain and ankyrin repeat-containing protein BOP (486 aa).

Residues 25 to 115 (SDVTFSVEGR…LYSGQVSIVP (91 aa)) form the BTB domain. The segment at 121–135 (RPNCGERGCWHTHCS) adopts a C2HC NPR-type zinc-finger fold. 4 residues coordinate Zn(2+): Cys-124, Cys-129, His-131, and Cys-134. 4 ANK repeats span residues 257 to 286 (QKIR…LNLD), 287 to 316 (EALA…DVNY), 321 to 350 (AGKT…DPNV), and 354 to 388 (DNVT…KLRL). Disordered stretches follow at residues 403-442 (EEGN…NHNI) and 464-486 (QMSD…HHDY). Composition is skewed to low complexity over residues 406-418 (NANN…TTTT) and 432-442 (SSSSSGNNHNI). Positions 466–475 (SDDHGGRHGD) are enriched in basic and acidic residues.

It belongs to the plant 'ANKYRIN-BTB/POZ' family. 'NOOT-BOP-COCH-like' (NBCL) subfamily. As to quaternary structure, homodimer. Expressed in xylem vessels and parenchyma cells of pedicel vascular tissue in the abscission zone (AZ). Accumulates in developing root nodules and present in roots, especially in the upper part.

It is found in the nucleus. Its subcellular location is the cytoplasm. The protein localises to the cell membrane. It functions in the pathway protein modification; protein ubiquitination. May act as a substrate-specific adapter of an E3 ubiquitin-protein ligase complex (CUL3-RBX1-BTB) which mediates the ubiquitination and subsequent proteasomal degradation of target proteins. Transcriptional co-regulator involved in promoting the fate and determination of leaf and flower meristems. Required for the abscission of senescent organs, probably by regulating the cell wall disorganization in abscission zones (AZs, e.g. pulvini at the base of leaves). Involved in the coordination of the symbiotic nodule developmental program; promotes the formation of root nodules by interacting directly with APP1 to modulate the expression of the nuclear transcription factor Y subunit (NF-YA1), a key nodulin. Necessary for the robust maintenance of nodule identity throughout the nodule developmental program. This Lupinus luteus (European yellow lupine) protein is BTB/POZ domain and ankyrin repeat-containing protein BOP.